The sequence spans 89 residues: Small ribosomal subunit protein uS15 (89 aa).

It belongs to the universal ribosomal protein uS15 family. Part of the 30S ribosomal subunit. Forms a bridge to the 50S subunit in the 70S ribosome, contacting the 23S rRNA.

Its function is as follows. One of the primary rRNA binding proteins, it binds directly to 16S rRNA where it helps nucleate assembly of the platform of the 30S subunit by binding and bridging several RNA helices of the 16S rRNA. Forms an intersubunit bridge (bridge B4) with the 23S rRNA of the 50S subunit in the ribosome. This is Small ribosomal subunit protein uS15 from Polynucleobacter necessarius subsp. necessarius (strain STIR1).